The sequence spans 326 residues: Probable cell division protein WhiA (326 aa).

The segment at residues 275-308 (SLDELGRLADPVMTKDAIAGRIRRLLAMADKRAL) is a DNA-binding region (H-T-H motif).

This sequence belongs to the WhiA family.

In terms of biological role, involved in cell division and chromosome segregation. This Pseudarthrobacter chlorophenolicus (strain ATCC 700700 / DSM 12829 / CIP 107037 / JCM 12360 / KCTC 9906 / NCIMB 13794 / A6) (Arthrobacter chlorophenolicus) protein is Probable cell division protein WhiA.